An 814-amino-acid chain; its full sequence is Valine--tRNA ligase (814 aa).

Residues 46–56 (PTVSGQLHIGH) carry the 'HIGH' region motif. Positions 536–540 (KMSKS) match the 'KMSKS' region motif. Lys-539 is a binding site for ATP.

It belongs to the class-I aminoacyl-tRNA synthetase family. ValS type 2 subfamily. Monomer.

It localises to the cytoplasm. The catalysed reaction is tRNA(Val) + L-valine + ATP = L-valyl-tRNA(Val) + AMP + diphosphate. In terms of biological role, catalyzes the attachment of valine to tRNA(Val). As ValRS can inadvertently accommodate and process structurally similar amino acids such as threonine, to avoid such errors, it has a 'posttransfer' editing activity that hydrolyzes mischarged Thr-tRNA(Val) in a tRNA-dependent manner. The chain is Valine--tRNA ligase from Rickettsia typhi (strain ATCC VR-144 / Wilmington).